Reading from the N-terminus, the 313-residue chain is 1-phosphofructokinase (313 aa).

Residues 222 to 227 (SMGAKG) and 254 to 255 (GD) contribute to the ATP site. Catalysis depends on Asp-255, which acts as the Proton acceptor.

This sequence belongs to the carbohydrate kinase PfkB family.

The catalysed reaction is beta-D-fructose 1-phosphate + ATP = beta-D-fructose 1,6-bisphosphate + ADP + H(+). Its function is as follows. Catalyzes the ATP-dependent phosphorylation of fructose-l-phosphate to fructose-l,6-bisphosphate. This Haemophilus influenzae (strain ATCC 51907 / DSM 11121 / KW20 / Rd) protein is 1-phosphofructokinase (fruK).